The sequence spans 171 residues: MHFNIFVEGEFNNVKGVFIDQSYPLRIQCTNCGSPHEKSVVLSEDSVGEGDFGEKVNLSITCRCCRRIMTLKILKLKEGREVKKHLLPTNFEDEFKEVWLSDMQKSRFLVSRIETNGAEVTSIESCILNLVSNQDVLFTNVNFEDRTVAKCNNLNMISSIIDFSLTVELAK.

This is an uncharacterized protein from Encephalitozoon cuniculi (strain GB-M1) (Microsporidian parasite).